The chain runs to 843 residues: Protein P (843 aa).

Positions 1-177 (MPLSYPHFRK…FCGSPYSWEQ (177 aa)) are terminal protein domain (TP). The spacer stretch occupies residues 178–346 (ELQHGSTSLN…YCLSHIINLL (169 aa)). Disordered regions lie at residues 228–259 (KQGQ…GVEP) and 283–314 (EKAN…SVGS). Positions 239–249 (RSGRLRSRVHT) are enriched in basic residues. Residues 347-690 (EDWGPCYEHG…YMNLYPVARQ (344 aa)) are polymerase/reverse transcriptase domain (RT). One can recognise a Reverse transcriptase domain in the interval 357–600 (QHYIRTPRTP…YSLHFMGYVI (244 aa)). The Mg(2+) site is built by D429, D551, and D552.

It belongs to the hepadnaviridae P protein family.

It carries out the reaction DNA(n) + a 2'-deoxyribonucleoside 5'-triphosphate = DNA(n+1) + diphosphate. The enzyme catalyses Endonucleolytic cleavage to 5'-phosphomonoester.. Its activity is regulated as follows. Activated by host HSP70 and HSP40 in vitro to be able to bind the epsilon loop of the pgRNA. Because deletion of the RNase H region renders the protein partly chaperone-independent, the chaperones may be needed indirectly to relieve occlusion of the RNA-binding site by this domain. Inhibited by several reverse-transcriptase inhibitors: Lamivudine, Adefovir and Entecavir. Its function is as follows. Multifunctional enzyme that converts the viral RNA genome into dsDNA in viral cytoplasmic capsids. This enzyme displays a DNA polymerase activity that can copy either DNA or RNA templates, and a ribonuclease H (RNase H) activity that cleaves the RNA strand of RNA-DNA heteroduplexes in a partially processive 3'- to 5'-endonucleasic mode. Neo-synthesized pregenomic RNA (pgRNA) are encapsidated together with the P protein, and reverse-transcribed inside the nucleocapsid. Initiation of reverse-transcription occurs first by binding the epsilon loop on the pgRNA genome, and is initiated by protein priming, thereby the 5'-end of (-)DNA is covalently linked to P protein. Partial (+)DNA is synthesized from the (-)DNA template and generates the relaxed circular DNA (RC-DNA) genome. After budding and infection, the RC-DNA migrates in the nucleus, and is converted into a plasmid-like covalently closed circular DNA (cccDNA). The activity of P protein does not seem to be necessary for cccDNA generation, and is presumably released from (+)DNA by host nuclear DNA repair machinery. The polypeptide is Protein P (Homo sapiens (Human)).